The following is a 400-amino-acid chain: MIANGFESMDKERVRKRPRMTWDEAPAEPEAKRAVIKGHGSDGRILSPPLRDDDRDGHYVFSLRDNLTPRYKILSKMGEGTFGRVLECWDRDTKEYVAIKIIRSIKKYRDAAMIEIDVLQKLVKSDKGRTRCVQMKNWFDYRNHICIVFEKLGPSLFDFLKRNKYSAFPLALVRDFGCQLLESVAYMHELQLVHTDLKPENILLVSSENVKLPDNKRSAANETHFRCLPKSSAIKLIDFGSTVCDNRIHHSIVQTRHYRSPEVILGLGWSYQCDLWSIGCILFELCTGEALFQTHDNLEHLAMMERALGPLPEHMTRKASRGAEKYFRRGCRLNWPEGANSRESIRAVKRLDRLKDMVSKHVDNTRSRFADLLYGLLAYDPSERLTANEALDHPFFKSSS.

The tract at residues 1–29 (MIANGFESMDKERVRKRPRMTWDEAPAEP) is disordered. The Protein kinase domain occupies 71–396 (YKILSKMGEG…ANEALDHPFF (326 aa)). Residues 77–85 (MGEGTFGRV) and Lys100 contribute to the ATP site. The active-site Proton acceptor is the Asp196.

It belongs to the protein kinase superfamily. CMGC Ser/Thr protein kinase family. Lammer subfamily.

The catalysed reaction is L-seryl-[protein] + ATP = O-phospho-L-seryl-[protein] + ADP + H(+). It carries out the reaction L-threonyl-[protein] + ATP = O-phospho-L-threonyl-[protein] + ADP + H(+). It catalyses the reaction L-tyrosyl-[protein] + ATP = O-phospho-L-tyrosyl-[protein] + ADP + H(+). The sequence is that of Serine/threonine-protein kinase AFC3 (AFC3) from Arabidopsis thaliana (Mouse-ear cress).